The chain runs to 361 residues: Teichoic acids export ATP-binding protein TagH (361 aa).

The ABC transporter domain occupies 13–246 (TKEYDLYKSQ…YREFTKWFKG (234 aa)). 60-67 (GVNGSGKS) provides a ligand contact to ATP. The segment at 247 to 361 (QSKKEKKHFQ…HDTNATSGVK (115 aa)) is unknown.

It belongs to the ABC transporter superfamily. Teichoic acids exporter (TC 3.A.1.104.1) family. The complex is composed of two ATP-binding proteins (TagH) and two transmembrane proteins (TagG).

It is found in the cell membrane. The enzyme catalyses ATP + H2O + teichoic acidSide 1 = ADP + phosphate + teichoic acidSide 2.. Part of the ABC transporter complex TagGH involved in teichoic acids export. Responsible for energy coupling to the transport system. This is Teichoic acids export ATP-binding protein TagH from Levilactobacillus brevis (strain ATCC 367 / BCRC 12310 / CIP 105137 / JCM 1170 / LMG 11437 / NCIMB 947 / NCTC 947) (Lactobacillus brevis).